A 412-amino-acid polypeptide reads, in one-letter code: Glutamate dehydrogenase (412 aa).

The active site involves K102.

The protein belongs to the Glu/Leu/Phe/Val dehydrogenases family. In roots, stems, leaves and flowers but not in fruits.

The protein localises to the mitochondrion matrix. The enzyme catalyses L-glutamate + NAD(+) + H2O = 2-oxoglutarate + NH4(+) + NADH + H(+). It catalyses the reaction L-glutamate + NADP(+) + H2O = 2-oxoglutarate + NH4(+) + NADPH + H(+). This chain is Glutamate dehydrogenase (GDH1), found in Solanum lycopersicum (Tomato).